Reading from the N-terminus, the 253-residue chain is MSEQKTIRFIITRQDTADSTPYDEEFEIPYRPNLNVISALMEIRRNPVNVKGEKTTPVTWDMNCLEEVCGACSMVINGKPRQSCTALIDQLEQPIRLKPMKTFPVVRDLQVDRSRMFDSLKKVKAWIPIDGTYDLGPGPRMPEKRRQWAYELSKCMTCGVCLEACPNVNSKSKFMGPAPMSQVRLFNAHPTGAMNKSERLEALMDEGGLADCGNSQNCVQSCPKGIPLTTSIAALNRDTNLQAFRNFFGSDRV.

[2Fe-2S] cluster-binding residues include Cys-64, Cys-69, and Cys-84. A 4Fe-4S ferredoxin-type domain is found at Arg-146–Phe-174. Cys-155, Cys-158, and Cys-161 together coordinate [4Fe-4S] cluster. Cys-165, Cys-212, and Cys-218 together coordinate [3Fe-4S] cluster. Cys-222 is a binding site for [4Fe-4S] cluster.

Belongs to the succinate dehydrogenase/fumarate reductase iron-sulfur protein family. In terms of assembly, in B.subtilis succinate dehydrogenase forms part of an enzyme complex containing three subunits: a flavoprotein, an iron-sulfur protein and cytochrome b-558. The cofactor is [2Fe-2S] cluster. [3Fe-4S] cluster is required as a cofactor. [4Fe-4S] cluster serves as cofactor.

It catalyses the reaction a quinone + succinate = fumarate + a quinol. It participates in carbohydrate metabolism; tricarboxylic acid cycle; fumarate from succinate (bacterial route): step 1/1. The chain is Succinate dehydrogenase iron-sulfur subunit (sdhB) from Bacillus subtilis (strain 168).